The primary structure comprises 82 residues: Delta-ctenitoxin-Pn2c (82 aa).

Residues 1–17 (MKVAILFLSILVLAVAS) form the signal peptide. Positions 18 to 34 (ESIEESRDDFAVEELGR) are excised as a propeptide. Intrachain disulfides connect Cys-37–Cys-51, Cys-44–Cys-57, Cys-48–Cys-80, Cys-50–Cys-65, and Cys-59–Cys-63.

As to expression, expressed by the venom gland.

Its subcellular location is the secreted. Reversible inhibitor of voltage-gated sodium channels (Nav). Delays the fast inactivation kinetics of neuronal-type sodium channels. In vivo, it induces rat penile erection. This effect may be due to the neuronal nitric oxide synthase (NOS1), since one of its selective inhibitor completely abolishes all the toxic effects of the toxin. This toxin also causes scratching, lacrimation, hypersalivation, sweating and agitation followed by spastic paralysis of the anterior and posterior extremities and death at dose levels of 0.24 mg/mouse. It is also insecticidal to the larval and adult forms of the house fly. This chain is Delta-ctenitoxin-Pn2c, found in Phoneutria nigriventer (Brazilian armed spider).